Consider the following 214-residue polypeptide: Ribonuclease HII (214 aa).

Positions 26-214 (EIVCGVDEAG…PVREAFDLIR (189 aa)) constitute an RNase H type-2 domain. 3 residues coordinate a divalent metal cation: Asp-32, Glu-33, and Asp-124.

Belongs to the RNase HII family. It depends on Mn(2+) as a cofactor. Mg(2+) serves as cofactor.

It localises to the cytoplasm. It carries out the reaction Endonucleolytic cleavage to 5'-phosphomonoester.. Endonuclease that specifically degrades the RNA of RNA-DNA hybrids. The protein is Ribonuclease HII of Burkholderia mallei (strain NCTC 10247).